A 164-amino-acid chain; its full sequence is Putative glutamine amidotransferase-like protein RP713 (164 aa).

A Glutamine amidotransferase type-1 domain is found at 39–164 (TIANPNSLFM…VITVKIIIYM (126 aa)).

This Rickettsia prowazekii (strain Madrid E) protein is Putative glutamine amidotransferase-like protein RP713.